The chain runs to 87 residues: Prolactin-releasing peptide (87 aa).

Residues 1–22 form the signal peptide; sequence MKVLRAWLLCLLMLGLALRGAA. Phe53 bears the Phenylalanine amide mark. A propeptide spanning residues 58–87 is cleaved from the precursor; the sequence is ATLGDVPKPGLRPRLTCFPLEGGAMSSQDG.

As to expression, medulla oblongata and hypothalamus.

Its subcellular location is the secreted. Stimulates prolactin (PRL) release and regulates the expression of prolactin through its receptor GPR10. May stimulate lactotrophs directly to secrete PRL. The sequence is that of Prolactin-releasing peptide (PRLH) from Homo sapiens (Human).